Consider the following 333-residue polypeptide: SPbeta prophage-derived recombinase-like protein YomM (333 aa).

A Core-binding (CB) domain is found at 30 to 113 (EEHRNLVQEF…GVSSLNNYIE (84 aa)). The region spanning 142 to 332 (YEKVKVTYDD…DFEEEKNQIF (191 aa)) is the Tyr recombinase domain. Catalysis depends on residues R180, K211, H281, and H308. The active-site O-(3'-phospho-DNA)-tyrosine intermediate is the Y319.

It belongs to the 'phage' integrase family.

This chain is SPbeta prophage-derived recombinase-like protein YomM (yomM), found in Bacillus subtilis (strain 168).